The chain runs to 328 residues: MIEKIWSGESPLWRLLLPLSWLYGLVSGAIRLCYKLKLKRAWRAPVPVVVVGNLTAGGNGKTPVVVWLVEQLQQRGICVGVVSRGYGGKAESYPLLLSADTTTAQAGDEPVLIYQRTDAPVAVSPVRSDAIKAILAQHPDVQIIVTDDGLQHYRLARDVEIVVIDGVRRFGNGWWLPAGPMRERAGRLKSVDAVIVNGGVPRSGEIPMHLLPGQAVNLRTGTRCDVAQLEHVVAMAGIGHPPRFFATLKMCGVQPEKCVPLADHQSLNHADVSALVSAGQTLVMTEKDAVKCRAFAEENWWYLPVDAQLSGDEPAKLLAQLTSLASGN.

55 to 62 (TAGGNGKT) contributes to the ATP binding site.

It belongs to the LpxK family.

The catalysed reaction is a lipid A disaccharide + ATP = a lipid IVA + ADP + H(+). The protein operates within glycolipid biosynthesis; lipid IV(A) biosynthesis; lipid IV(A) from (3R)-3-hydroxytetradecanoyl-[acyl-carrier-protein] and UDP-N-acetyl-alpha-D-glucosamine: step 6/6. Transfers the gamma-phosphate of ATP to the 4'-position of a tetraacyldisaccharide 1-phosphate intermediate (termed DS-1-P) to form tetraacyldisaccharide 1,4'-bis-phosphate (lipid IVA). The chain is Tetraacyldisaccharide 4'-kinase from Escherichia coli (strain SMS-3-5 / SECEC).